Consider the following 352-residue polypeptide: Putative F-box protein At5g14160 (352 aa).

The 47-residue stretch at 14–60 folds into the F-box domain; sequence GVDWSELPEDVIRLVLRRLRLSDFHRARAVCSTWCRVWGDCVSKPNQ.

The polypeptide is Putative F-box protein At5g14160 (Arabidopsis thaliana (Mouse-ear cress)).